The following is a 217-amino-acid chain: Probable transaldolase (217 aa).

The Schiff-base intermediate with substrate role is filled by K83.

Belongs to the transaldolase family. Type 3B subfamily.

The protein resides in the cytoplasm. The enzyme catalyses D-sedoheptulose 7-phosphate + D-glyceraldehyde 3-phosphate = D-erythrose 4-phosphate + beta-D-fructose 6-phosphate. It functions in the pathway carbohydrate degradation; pentose phosphate pathway; D-glyceraldehyde 3-phosphate and beta-D-fructose 6-phosphate from D-ribose 5-phosphate and D-xylulose 5-phosphate (non-oxidative stage): step 2/3. Transaldolase is important for the balance of metabolites in the pentose-phosphate pathway. This Anaeromyxobacter dehalogenans (strain 2CP-C) protein is Probable transaldolase.